The sequence spans 370 residues: tRNA-specific 2-thiouridylase MnmA (370 aa).

ATP contacts are provided by residues 25–32 (ALSGGVDS) and Leu-51. The active-site Nucleophile is the Cys-112. The cysteines at positions 112 and 211 are disulfide-linked. Residue Gly-137 participates in ATP binding. The interval 161–163 (KDQ) is interaction with tRNA. Cys-211 serves as the catalytic Cysteine persulfide intermediate. An interaction with tRNA region spans residues 316–317 (RY).

The protein belongs to the MnmA/TRMU family.

The protein localises to the cytoplasm. The enzyme catalyses S-sulfanyl-L-cysteinyl-[protein] + uridine(34) in tRNA + AH2 + ATP = 2-thiouridine(34) in tRNA + L-cysteinyl-[protein] + A + AMP + diphosphate + H(+). Its function is as follows. Catalyzes the 2-thiolation of uridine at the wobble position (U34) of tRNA, leading to the formation of s(2)U34. This is tRNA-specific 2-thiouridylase MnmA from Synechococcus sp. (strain JA-3-3Ab) (Cyanobacteria bacterium Yellowstone A-Prime).